A 394-amino-acid chain; its full sequence is Major outer membrane porin, serovar B (394 aa).

The first 22 residues, 1-22, serve as a signal peptide directing secretion; sequence MKKLLKSVLVFAALSSASSLQA.

The protein belongs to the chlamydial porin (CP) (TC 1.B.2) family. In terms of assembly, part of a disulfide cross-linked outer membrane complex (COMC) composed of the major outer membrane porin (MOMP), the small cysteine-rich protein (OmcA) and the large cysteine-rich periplasmic protein (OmcB).

Its subcellular location is the cell outer membrane. Its function is as follows. In elementary bodies (EBs, the infectious stage, which is able to survive outside the host cell) provides the structural integrity of the outer envelope through disulfide cross-links with the small cysteine-rich protein and the large cysteine-rich periplasmic protein. It has been described in publications as the Sarkosyl-insoluble COMC (Chlamydia outer membrane complex), and serves as the functional equivalent of peptidoglycan. In terms of biological role, permits diffusion of specific solutes through the outer membrane. The sequence is that of Major outer membrane porin, serovar B (ompA) from Chlamydia trachomatis.